Reading from the N-terminus, the 245-residue chain is Photosystem II protein PSBS2 (245 aa).

The transit peptide at 1-25 (MAMTLSTKAFAQRGVSARKNTVRVY) directs the protein to the chloroplast. 4 consecutive transmembrane segments (helical) span residues 72 to 92 (LFVG…EILT), 108 to 128 (GIEV…AAVL), 185 to 205 (LGFA…LAQF), and 217 to 237 (EFGL…EGSG).

It belongs to the ELIP/psbS family.

Its subcellular location is the plastid. It localises to the chloroplast thylakoid membrane. Required for non-photochemical quenching (NPQ), a mechanism that converts and dissipates the harmful excess absorbed light energy into heat and protect the photosynthetic apparatus from photo-oxidative damage. Seems involved in the activation of NPQ, possibly by promoting conformational changes required for activation of LHCSR3-dependent quenching in the antenna of photosystem II (PSII). This is Photosystem II protein PSBS2 from Chlamydomonas reinhardtii (Chlamydomonas smithii).